Consider the following 914-residue polypeptide: Probable dipeptidyl-aminopeptidase B (914 aa).

Positions 1-10 (MATFSDHETS) are enriched in basic and acidic residues. Positions 1–63 (MATFSDHETS…TGMDNGDRYR (63 aa)) are disordered. The Cytoplasmic portion of the chain corresponds to 1–91 (MATFSDHETS…KAATGGRARR (91 aa)). The segment covering 20–35 (STSSASQTSSDSGLSS) has biased composition (low complexity). Residues 45-56 (QPFSAPNGTTGM) show a composition bias toward polar residues. Residues 92 to 112 (IFWLLVLLCFGGWLLAFVLFL) traverse the membrane as a helical; Signal-anchor for type II membrane protein segment. Residues 113 to 914 (TGGRANYQSA…RFKRSLPVLV (802 aa)) lie on the Vacuolar side of the membrane. N-linked (GlcNAc...) asparagine glycans are attached at residues Asn-348, Asn-565, and Asn-639. Ser-753 serves as the catalytic Charge relay system. Asn-807 carries N-linked (GlcNAc...) asparagine glycosylation. Catalysis depends on charge relay system residues Asp-830 and His-863.

The protein belongs to the peptidase S9B family.

Its subcellular location is the vacuole membrane. The catalysed reaction is Release of an N-terminal dipeptide, Xaa-Yaa-|-Zaa-, from a polypeptide, preferentially when Yaa is Pro, provided Zaa is neither Pro nor hydroxyproline.. In terms of biological role, type IV dipeptidyl-peptidase which removes N-terminal dipeptides sequentially from polypeptides having unsubstituted N-termini provided that the penultimate residue is proline. The protein is Probable dipeptidyl-aminopeptidase B (dapB) of Aspergillus clavatus (strain ATCC 1007 / CBS 513.65 / DSM 816 / NCTC 3887 / NRRL 1 / QM 1276 / 107).